The primary structure comprises 58 residues: Large ribosomal subunit protein uL30 (58 aa).

This sequence belongs to the universal ribosomal protein uL30 family. Part of the 50S ribosomal subunit.

This Bacteroides thetaiotaomicron (strain ATCC 29148 / DSM 2079 / JCM 5827 / CCUG 10774 / NCTC 10582 / VPI-5482 / E50) protein is Large ribosomal subunit protein uL30.